Here is a 437-residue protein sequence, read N- to C-terminus: tRNA-2-methylthio-N(6)-dimethylallyladenosine synthase (437 aa).

Positions 1-115 constitute an MTTase N-terminal domain; sequence MKVYIETMGC…ISQVIHKEKA (115 aa). 6 residues coordinate [4Fe-4S] cluster: cysteine 10, cysteine 46, cysteine 78, cysteine 148, cysteine 152, and cysteine 155. The region spanning 134–367 is the Radical SAM core domain; that stretch reads KKAQIRSLLN…QNRHKEILEE (234 aa). In terms of domain architecture, TRAM spans 370–436; the sequence is KLEVGKTHVV…KGRLIAAIKG (67 aa).

It belongs to the methylthiotransferase family. MiaB subfamily. In terms of assembly, monomer. [4Fe-4S] cluster serves as cofactor.

Its subcellular location is the cytoplasm. The catalysed reaction is N(6)-dimethylallyladenosine(37) in tRNA + (sulfur carrier)-SH + AH2 + 2 S-adenosyl-L-methionine = 2-methylsulfanyl-N(6)-dimethylallyladenosine(37) in tRNA + (sulfur carrier)-H + 5'-deoxyadenosine + L-methionine + A + S-adenosyl-L-homocysteine + 2 H(+). Its function is as follows. Catalyzes the methylthiolation of N6-(dimethylallyl)adenosine (i(6)A), leading to the formation of 2-methylthio-N6-(dimethylallyl)adenosine (ms(2)i(6)A) at position 37 in tRNAs that read codons beginning with uridine. This Helicobacter pylori (strain P12) protein is tRNA-2-methylthio-N(6)-dimethylallyladenosine synthase.